Reading from the N-terminus, the 478-residue chain is Transposase for insertion sequence element IS231B (478 aa).

This sequence belongs to the transposase 11 family.

Functionally, involved in the transposition of the insertion sequence. In Bacillus thuringiensis subsp. berliner, this protein is Transposase for insertion sequence element IS231B.